Consider the following 89-residue polypeptide: Small ribosomal subunit protein uS15 (89 aa).

This sequence belongs to the universal ribosomal protein uS15 family. Part of the 30S ribosomal subunit. Forms a bridge to the 50S subunit in the 70S ribosome, contacting the 23S rRNA.

In terms of biological role, one of the primary rRNA binding proteins, it binds directly to 16S rRNA where it helps nucleate assembly of the platform of the 30S subunit by binding and bridging several RNA helices of the 16S rRNA. Its function is as follows. Forms an intersubunit bridge (bridge B4) with the 23S rRNA of the 50S subunit in the ribosome. The chain is Small ribosomal subunit protein uS15 from Polynucleobacter necessarius subsp. necessarius (strain STIR1).